A 461-amino-acid polypeptide reads, in one-letter code: Argininosuccinate lyase (461 aa).

This sequence belongs to the lyase 1 family. Argininosuccinate lyase subfamily.

It localises to the cytoplasm. It carries out the reaction 2-(N(omega)-L-arginino)succinate = fumarate + L-arginine. It functions in the pathway amino-acid biosynthesis; L-arginine biosynthesis; L-arginine from L-ornithine and carbamoyl phosphate: step 3/3. The chain is Argininosuccinate lyase from Desulfitobacterium hafniense (strain DSM 10664 / DCB-2).